An 856-amino-acid chain; its full sequence is Phosphoenolpyruvate synthase (856 aa).

The Tele-phosphohistidine intermediate role is filled by His-433. Arg-523, Arg-636, Glu-738, Gly-759, Ser-760, Asn-761, and Asp-762 together coordinate substrate. Glu-738 is a binding site for Mg(2+). Mg(2+) is bound at residue Asp-762. The active-site Proton donor is Cys-809.

The protein belongs to the PEP-utilizing enzyme family. It depends on Mg(2+) as a cofactor.

It catalyses the reaction pyruvate + ATP + H2O = phosphoenolpyruvate + AMP + phosphate + 2 H(+). It functions in the pathway carbohydrate biosynthesis; gluconeogenesis. Functionally, catalyzes the phosphorylation of pyruvate to phosphoenolpyruvate. The chain is Phosphoenolpyruvate synthase (ppsA) from Aquifex aeolicus (strain VF5).